The following is a 316-amino-acid chain: Malate dehydrogenase 2 (316 aa).

NAD(+) contacts are provided by residues 10–15 (GGGQIG) and Asp34. Substrate contacts are provided by Arg83 and Arg89. Residues Asn96 and 119 to 121 (ISN) contribute to the NAD(+) site. Residues Asn121 and Arg152 each coordinate substrate. The active-site Proton acceptor is the His176.

Belongs to the LDH/MDH superfamily. MDH type 3 family.

The catalysed reaction is (S)-malate + NAD(+) = oxaloacetate + NADH + H(+). In terms of biological role, catalyzes the reversible oxidation of malate to oxaloacetate. The protein is Malate dehydrogenase 2 of Anaeromyxobacter dehalogenans (strain 2CP-C).